Consider the following 125-residue polypeptide: Oxytocin-neurophysin 1 (125 aa).

The signal sequence occupies residues 1 to 19 (MACPSLACCLLGLLALTSA). C20 and C25 are oxidised to a cystine. G28 carries the post-translational modification Glycine amide. Cystine bridges form between C41/C85, C44/C58, C52/C75, C59/C65, C92/C104, C98/C116, and C105/C110.

It belongs to the vasopressin/oxytocin family. As to quaternary structure, interacts with oxytocin receptor (Ki=1.5 nM). Interacts with vasopressin V1aR/AVPR1A (Ki=37 nM), V1bR/AVPR1B (Ki=222 nM), and V2R/AVPR2 receptors (Ki=823 nM).

Its function is as follows. Neurophysin 1 specifically binds oxytocin. Oxytocin causes contraction of the smooth muscle of the uterus and of the mammary gland. Acts by binding to oxytocin receptor (OXTR). The sequence is that of Oxytocin-neurophysin 1 (Oxt) from Rattus norvegicus (Rat).